Reading from the N-terminus, the 138-residue chain is Translation initiation factor 5A (138 aa).

Lys-37 carries the post-translational modification Hypusine.

This sequence belongs to the eIF-5A family.

It localises to the cytoplasm. Functionally, functions by promoting the formation of the first peptide bond. This is Translation initiation factor 5A from Pyrococcus furiosus (strain ATCC 43587 / DSM 3638 / JCM 8422 / Vc1).